The sequence spans 635 residues: Cerevisin (635 aa).

Residues 1–19 (MKLENTLFTLGALGSISAA) form the signal peptide. A propeptide spanning residues 20 to 280 (LVIPNLENAA…VERDSIVEAT (261 aa)) is cleaved from the precursor. Composition is skewed to basic and acidic residues over residues 35–50 (INKE…VEFT), 74–85 (KGQDKESPEFNG), 94–109 (SAHE…HESS), and 126–136 (GCHENKVEEKK). Residues 35-155 (INKEDHHERP…KHHEKTLEKG (121 aa)) form a disordered region. The segment covering 137-155 (MKGKKVKGKKHHEKTLEKG) has biased composition (basic residues). The region spanning 182–278 (RYIIVFKRGA…DFVERDSIVE (97 aa)) is the Inhibitor I9 domain. Residues 289–614 (PWGLARISHR…KQELNMDEFI (326 aa)) enclose the Peptidase S8 domain. Active-site charge relay system residues include aspartate 325 and histidine 357. Cysteine 460 and cysteine 491 form a disulfide bridge. Catalysis depends on serine 519, which acts as the Charge relay system. Residues 575–635 (DTPNVLIYNG…RDILDKLNII (61 aa)) constitute a propeptide that is removed on maturation. N-linked (GlcNAc...) asparagine glycosylation occurs at asparagine 594.

Belongs to the peptidase S8 family. Activated by N- and C-terminal proteolytic cleavage. Protease B (PrB/PRB1) processing requires at least 4 cleavages. First, the signal peptide is removed from the 76 kDa preproprotease B by signal peptidase in the ER. Then, PrB removes its own Pro-region (in trans) at the N-terminus, producing a 39 kDa form before exiting the ER. In the Golgi complex, the C-terminal Post-region of the 40 kDa proprotease B undergoes protease A (PrA/PEP4)-mediated processing to a 37 kDa intermediate, which in turn is quickly processed again by PrB in trans to yield the 31 kDa mature PrB. In terms of processing, glycosylated. Preproprotease B is a 76 kDa unglycosylated precursor that enters the endoplasmic reticulum (ER), where it receives one Asn-linked and an undetermined number of non-Asn-linked carbohydrate side chains. In the Golgi complex, the 39 kDa form becomes 40 kDa, due to elaboration of the Asn-linked side chain. The ultimate processing step removes a peptide containing the Asn-linked chain. Mature PrB has only non-Asn-linked carbohydrates.

It is found in the vacuole. It carries out the reaction Hydrolysis of proteins with broad specificity, and of Bz-Arg-OEt &gt; Ac-Tyr-OEt. Does not hydrolyze peptide amides.. Vacuolar proteinase B involved in protein degradation in the vacuole. Among other substrates, acts on carboxypeptidase Y (cpY/PRC1) to activate it by processing its Pro-peptide. Required for meiosis and spore formation, and for optimal survival in stationary phase. The sequence is that of Cerevisin (PRB1) from Saccharomyces cerevisiae (strain ATCC 204508 / S288c) (Baker's yeast).